A 502-amino-acid polypeptide reads, in one-letter code: D-alanine--D-alanyl carrier protein ligase (502 aa).

150 to 151 (TS) provides a ligand contact to ATP. Residue Asp-195 participates in D-alanine binding. 290–295 (NTYGPT) contributes to the ATP binding site. Val-299 contributes to the D-alanine binding site. The ATP site is built by Asp-381 and Lys-490. Lys-490 contacts D-alanine.

This sequence belongs to the ATP-dependent AMP-binding enzyme family. DltA subfamily.

Its subcellular location is the cytoplasm. It catalyses the reaction holo-[D-alanyl-carrier protein] + D-alanine + ATP = D-alanyl-[D-alanyl-carrier protein] + AMP + diphosphate. It participates in cell wall biogenesis; lipoteichoic acid biosynthesis. Its function is as follows. Catalyzes the first step in the D-alanylation of lipoteichoic acid (LTA), the activation of D-alanine and its transfer onto the D-alanyl carrier protein (Dcp) DltC. In an ATP-dependent two-step reaction, forms a high energy D-alanyl-AMP intermediate, followed by transfer of the D-alanyl residue as a thiol ester to the phosphopantheinyl prosthetic group of the Dcp. D-alanylation of LTA plays an important role in modulating the properties of the cell wall in Gram-positive bacteria, influencing the net charge of the cell wall. The polypeptide is D-alanine--D-alanyl carrier protein ligase (Bacillus licheniformis (strain ATCC 14580 / DSM 13 / JCM 2505 / CCUG 7422 / NBRC 12200 / NCIMB 9375 / NCTC 10341 / NRRL NRS-1264 / Gibson 46)).